Here is a 334-residue protein sequence, read N- to C-terminus: Probable GTP 3',8-cyclase (334 aa).

Residues 24–256 (PYGRKVTGLR…RKKYIIDGVE (233 aa)) form the Radical SAM core domain. Arg-33 lines the GTP pocket. Cys-40 and Cys-44 together coordinate [4Fe-4S] cluster. Tyr-46 serves as a coordination point for S-adenosyl-L-methionine. Cys-47 contributes to the [4Fe-4S] cluster binding site. Lys-85 lines the GTP pocket. Residue Gly-89 participates in S-adenosyl-L-methionine binding. Thr-113 contacts GTP. S-adenosyl-L-methionine is bound at residue Ser-137. Residue Lys-176 participates in GTP binding. [4Fe-4S] cluster contacts are provided by Cys-269 and Cys-272. 274–276 (RLR) lines the GTP pocket. Cys-286 serves as a coordination point for [4Fe-4S] cluster.

This sequence belongs to the radical SAM superfamily. MoaA family. The cofactor is [4Fe-4S] cluster.

It catalyses the reaction GTP + AH2 + S-adenosyl-L-methionine = (8S)-3',8-cyclo-7,8-dihydroguanosine 5'-triphosphate + 5'-deoxyadenosine + L-methionine + A + H(+). Its pathway is cofactor biosynthesis; molybdopterin biosynthesis. In terms of biological role, catalyzes the cyclization of GTP to (8S)-3',8-cyclo-7,8-dihydroguanosine 5'-triphosphate. The polypeptide is Probable GTP 3',8-cyclase (Methanosarcina acetivorans (strain ATCC 35395 / DSM 2834 / JCM 12185 / C2A)).